We begin with the raw amino-acid sequence, 167 residues long: Small ribosomal subunit protein uS5 (167 aa).

An S5 DRBM domain is found at 12-75 (LQEKLIAVNR…EKARRNIVTV (64 aa)).

Belongs to the universal ribosomal protein uS5 family. Part of the 30S ribosomal subunit. Contacts proteins S4 and S8.

With S4 and S12 plays an important role in translational accuracy. Its function is as follows. Located at the back of the 30S subunit body where it stabilizes the conformation of the head with respect to the body. This Shewanella baltica (strain OS223) protein is Small ribosomal subunit protein uS5.